The following is a 366-amino-acid chain: Beta-1,3-glucan-binding protein (366 aa).

An N-terminal signal peptide occupies residues 1–17 (MKGFVASVVLLACGALA). In terms of domain architecture, GH16 spans 18 to 364 (ADIVEPEDCT…YVRVWKMEST (347 aa)). A glycan (N-linked (GlcNAc...) asparagine) is linked at Asn-66.

Belongs to the glycosyl hydrolase 16 family. Constitutively expressed in hemocytes.

The protein resides in the secreted. Functionally, binds to beta-1,3-glucan. May play a role in recognition of microorganisms and in activation of the prophenoloxidase cascade. This Penaeus monodon (Giant tiger prawn) protein is Beta-1,3-glucan-binding protein.